Reading from the N-terminus, the 259-residue chain is Small ribosomal subunit protein eS4 (259 aa).

Residues 41–105 (LPLSVLLKER…TDQSFRILYD (65 aa)) form the S4 RNA-binding domain. Threonine 248 is modified (phosphothreonine). At serine 258 the chain carries Phosphoserine.

This sequence belongs to the eukaryotic ribosomal protein eS4 family.

The chain is Small ribosomal subunit protein eS4 from Tetrahymena thermophila.